A 344-amino-acid polypeptide reads, in one-letter code: MTATLERRESANLWARFCDWITSTENRLYIGWFGVLMFPLLLTATSVFIIAFIAAPPVDIDGIREPVAGSLLYGNNIISGAIVPSSAAIGLHFYPIWEAASVDEWLYNGGPYELIVLHFLLGVACYMGREWELSFRLGMRPWIAVAYSAPVAAATAVFLIYPIGQGSFSDGMPLGISGTFNFMIVFQAEHNILMHPFHMLGVAGVFGGSLFSAMHGSLVTSSLIRETTENESVNSGYKFGQEFETYNIVAAHGYFGRLIFQYASFNNSRSLHFFLAAWPVVCIWFTALGISTMAFNLNGFNFNQSVVDSQGRVINTWADIINRANLGMEVMHERNAHNFPLDLA.

Thr2 bears the N-acetylthreonine mark. Thr2 is modified (phosphothreonine). The next 3 membrane-spanning stretches (helical) occupy residues 29–46 (YIGW…TATS), 118–133 (HFLL…EWEL), and 142–156 (WIAV…AATA). Position 118 (His118) interacts with chlorophyll a. Tyr126 is a binding site for pheophytin a. Residues Asp170 and Glu189 each coordinate [CaMn4O5] cluster. The chain crosses the membrane as a helical span at residues 197–218 (FHMLGVAGVFGGSLFSAMHGSL). His198 lines the chlorophyll a pocket. A quinone is bound by residues His215 and 264 to 265 (SF). His215 contacts Fe cation. His272 contacts Fe cation. Residues 274-288 (FLAAWPVVCIWFTAL) traverse the membrane as a helical segment. [CaMn4O5] cluster is bound by residues His332, Glu333, Asp342, and Ala344.

It belongs to the reaction center PufL/M/PsbA/D family. As to quaternary structure, PSII is composed of 1 copy each of membrane proteins PsbA, PsbB, PsbC, PsbD, PsbE, PsbF, PsbH, PsbI, PsbJ, PsbK, PsbL, PsbM, PsbT, PsbX, PsbY, PsbZ, Psb30/Ycf12, at least 3 peripheral proteins of the oxygen-evolving complex and a large number of cofactors. It forms dimeric complexes. The cofactor is The D1/D2 heterodimer binds P680, chlorophylls that are the primary electron donor of PSII, and subsequent electron acceptors. It shares a non-heme iron and each subunit binds pheophytin, quinone, additional chlorophylls, carotenoids and lipids. D1 provides most of the ligands for the Mn4-Ca-O5 cluster of the oxygen-evolving complex (OEC). There is also a Cl(-1) ion associated with D1 and D2, which is required for oxygen evolution. The PSII complex binds additional chlorophylls, carotenoids and specific lipids.. Tyr-161 forms a radical intermediate that is referred to as redox-active TyrZ, YZ or Y-Z.

Its subcellular location is the plastid. It localises to the chloroplast thylakoid membrane. It catalyses the reaction 2 a plastoquinone + 4 hnu + 2 H2O = 2 a plastoquinol + O2. In terms of biological role, photosystem II (PSII) is a light-driven water:plastoquinone oxidoreductase that uses light energy to abstract electrons from H(2)O, generating O(2) and a proton gradient subsequently used for ATP formation. It consists of a core antenna complex that captures photons, and an electron transfer chain that converts photonic excitation into a charge separation. The D1/D2 (PsbA/PsbD) reaction center heterodimer binds P680, the primary electron donor of PSII as well as several subsequent electron acceptors. In Staurastrum punctulatum (Green alga), this protein is Photosystem II protein D1.